Here is a 1064-residue protein sequence, read N- to C-terminus: Lysine-specific demethylase 4A (1064 aa).

Ala2 is modified (N-acetylalanine). The 43-residue stretch at Ile14–Arg56 folds into the JmjN domain. Tyr132 contacts 2-oxoglutarate. The region spanning Glu142–Cys308 is the JmjC domain. Positions 188 and 190 each coordinate Fe cation. 2-oxoglutarate contacts are provided by Asn198 and Lys206. Zn(2+)-binding residues include Cys234 and His240. Lys241 serves as a coordination point for 2-oxoglutarate. Position 276 (His276) interacts with Fe cation. Zn(2+) is bound by residues Cys306 and Cys308. Disordered regions lie at residues Leu354 to Asp384, Leu434 to Ser489, Ser502 to Glu537, Arg549 to Glu573, and Asn590 to Leu643. The span at Glu368–Glu382 shows a compositional bias: acidic residues. Positions Thr460–Leu472 are enriched in basic and acidic residues. A compositionally biased stretch (acidic residues) spans Glu473–Glu482. Residues Ser509–Ser525 show a composition bias toward low complexity. Position 523 is a phosphoserine (Ser523). Over residues Ala528–Glu537 the composition is skewed to polar residues. Residues Thr593–Pro608 show a composition bias toward basic residues. The interaction with NCOR1 stretch occupies residues Arg597–Lys638. Residues Gly615–Glu634 are compositionally biased toward acidic residues. The PHD-type 1 zinc-finger motif lies at Met709–Ser767. A C2HC pre-PHD-type zinc finger spans residues Glu772–Ala805. A PHD-type 2 zinc finger spans residues Leu828–Lys885. Tudor domains lie at Leu897–Leu954 and Gly955–Pro1011.

The protein belongs to the JHDM3 histone demethylase family. Interacts with histone deacetylase proteins HDAC1, HDAC2 and HDAC3. Interacts with RB and NCOR1. Interacts with VRK1. Fe(2+) is required as a cofactor. In terms of processing, ubiquitinated by RNF8 and RNF168, leading to its degradation. Degradation promotes accessibility of H4K20me2 mark for DNA repair protein TP53BP1, which is then recruited. Also ubiquitinated by the SCF(FBXO22) complex; leading to proteasomal degradation. Widely expressed.

The protein resides in the nucleus. It carries out the reaction N(6),N(6),N(6)-trimethyl-L-lysyl(9)-[histone H3] + 2 2-oxoglutarate + 2 O2 = N(6)-methyl-L-lysyl(9)-[histone H3] + 2 formaldehyde + 2 succinate + 2 CO2. The catalysed reaction is N(6),N(6),N(6)-trimethyl-L-lysyl(36)-[histone H3] + 2 2-oxoglutarate + 2 O2 = N(6)-methyl-L-lysyl(36)-[histone H3] + 2 formaldehyde + 2 succinate + 2 CO2. In terms of biological role, histone demethylase that specifically demethylates 'Lys-9' and 'Lys-36' residues of histone H3, thereby playing a central role in histone code. Does not demethylate histone H3 'Lys-4', H3 'Lys-27' nor H4 'Lys-20'. Demethylates trimethylated H3 'Lys-9' and H3 'Lys-36' residue, while it has no activity on mono- and dimethylated residues. Demethylation of Lys residue generates formaldehyde and succinate. Participates in transcriptional repression of ASCL2 and E2F-responsive promoters via the recruitment of histone deacetylases and NCOR1, respectively. The protein is Lysine-specific demethylase 4A (Kdm4a) of Mus musculus (Mouse).